Consider the following 442-residue polypeptide: 26S proteasome non-ATPase regulatory subunit 12 homolog B (442 aa).

Positions 1–129 (MEESRQLESS…KEEQGLIAEA (129 aa)) form a coiled coil. The 172-residue stretch at 232 to 403 (EICRSYKAIY…GIICFQIVKD (172 aa)) folds into the PCI domain.

It belongs to the proteasome subunit p55 family. As to quaternary structure, component of the 19S regulatory particle (RP/PA700) lid subcomplex of the 26S proteasome. The 26S proteasome is composed of a core protease (CP), known as the 20S proteasome, capped at one or both ends by the 19S regulatory particle (RP/PA700). The RP/PA700 complex is composed of at least 17 different subunits in two subcomplexes, the base and the lid, which form the portions proximal and distal to the 20S proteolytic core, respectively. Ubiquitous with highest expression in flowers.

The protein localises to the cytoplasm. The protein resides in the nucleus. In terms of biological role, acts as a regulatory subunit of the 26 proteasome which is involved in the ATP-dependent degradation of ubiquitinated proteins. Acts redundantly with RPN5A. The polypeptide is 26S proteasome non-ATPase regulatory subunit 12 homolog B (RPN5B) (Arabidopsis thaliana (Mouse-ear cress)).